A 247-amino-acid polypeptide reads, in one-letter code: Putative cyclin-T1-1 (247 aa).

The protein belongs to the cyclin family. Cyclin T subfamily.

The polypeptide is Putative cyclin-T1-1 (CYCT1-1) (Arabidopsis thaliana (Mouse-ear cress)).